The chain runs to 408 residues: Cytotoxic granule-associated RNA binding protein tiar-1 (408 aa).

3 RRM domains span residues 46–121 (RTLY…WAVE), 135–213 (FHVF…WATR), and 241–312 (TSVY…WGKT).

Expressed in the germline and also in somatic tissues. Expressed in Ggonads and oocytes. Expression is slightly reduced in the most proximal oocytes, especially the -1 oocyte. Aggregates mostly in the head neurons, muscles, intestine, vulval and hypodermal cells during heat shock. Expressed only in the intestine as a response to heat shock, starvation and dietary restriction.

Its subcellular location is the cytoplasm. The protein localises to the nucleus. It localises to the stress granule. Acts downstream of ced-9 in the induction of germline apoptosis under different stress conditions including starvation, osmotic, oxidative, heat shock and UV stress. Plays a role in the formation of stress granules in response to heat shock and oxidative stress but not in response to osmotic stress. Required for the formation of stress granules in the core gonad but may not play a critical role in this process in the oocytes. Plays an important role in the formation of stress granules in the embryo. Protects female germ cells and embryos from heat shock. This is Cytotoxic granule-associated RNA binding protein tiar-1 from Caenorhabditis elegans.